Consider the following 1191-residue polypeptide: Major DNA-binding protein (1191 aa).

The disordered stretch occupies residues 288–307 (ETTKGQSKMGKREGSDVSGG). A zinc finger lies at 498 to 511 (CELCDKTSRIYCAH). The Required for filament formation signature appears at 841–842 (FW). Positions 1166–1191 (KRPNMNVFDLEPIPEKRVPVLSVDML) are required for nuclear localization.

It belongs to the herpesviridae major DNA-binding protein family. As to quaternary structure, homooligomers. Forms double-helical filaments necessary for the formation of replication compartments within the host nucleus. Interacts with the origin-binding protein. Interacts with the helicase primase complex; this interaction stimulates primer synthesis activity of the helicase-primase complex. Interacts with the DNA polymerase. Interacts with the alkaline exonuclease; this interaction increases its nuclease processivity.

The protein localises to the host nucleus. Functionally, plays several crucial roles in viral infection. Participates in the opening of the viral DNA origin to initiate replication by interacting with the origin-binding protein. May disrupt loops, hairpins and other secondary structures present on ssDNA to reduce and eliminate pausing of viral DNA polymerase at specific sites during elongation. Promotes viral DNA recombination by performing strand-transfer, characterized by the ability to transfer a DNA strand from a linear duplex to a complementary single-stranded DNA circle. Can also catalyze the renaturation of complementary single strands. Additionally, reorganizes the host cell nucleus, leading to the formation of prereplicative sites and replication compartments. This process is driven by the protein which can form double-helical filaments in the absence of DNA. This is Major DNA-binding protein from Gallid herpesvirus 2 (strain Chicken/Md5/ATCC VR-987) (GaHV-2).